We begin with the raw amino-acid sequence, 206 residues long: AT-hook motif nuclear-localized protein 28 (206 aa).

2 disordered regions span residues Met1 to Pro21 and Thr160 to Tyr206. A DNA-binding region (a.T hook) is located at residues Gly5 to Lys17. Residues Pro7–Pro18 are compositionally biased toward basic residues. The region spanning Asp27–Glu173 is the PPC domain.

The protein localises to the nucleus. In terms of biological role, transcription factor that specifically binds AT-rich DNA sequences related to the nuclear matrix attachment regions (MARs). The protein is AT-hook motif nuclear-localized protein 28 of Arabidopsis thaliana (Mouse-ear cress).